The primary structure comprises 137 residues: Large ribosomal subunit protein uL16 (137 aa).

This sequence belongs to the universal ribosomal protein uL16 family. In terms of assembly, part of the 50S ribosomal subunit.

Functionally, binds 23S rRNA and is also seen to make contacts with the A and possibly P site tRNAs. The polypeptide is Large ribosomal subunit protein uL16 (Acinetobacter baumannii (strain AB307-0294)).